The chain runs to 95 residues: ATP-dependent Clp protease adapter protein ClpS (95 aa).

Belongs to the ClpS family. Binds to the N-terminal domain of the chaperone ClpA.

Functionally, involved in the modulation of the specificity of the ClpAP-mediated ATP-dependent protein degradation. This is ATP-dependent Clp protease adapter protein ClpS from Synechococcus elongatus (strain ATCC 33912 / PCC 7942 / FACHB-805) (Anacystis nidulans R2).